The chain runs to 97 residues: Class II hydrophobin NC2 (97 aa).

The first 17 residues, 1–17, serve as a signal peptide directing secretion; that stretch reads MQFTIATVLSLLTITLA. 4 disulfides stabilise this stretch: C31–C79, C40–C70, C41–C53, and C80–C91. N-linked (GlcNAc...) asparagine glycosylation occurs at N62.

Belongs to the cerato-ulmin hydrophobin family. In terms of assembly, homotrimer. Further self-assembles to form highly ordered films at water-air interfaces through intermolecular interactions.

Its subcellular location is the secreted. The protein resides in the cell wall. Functionally, aerial growth, conidiation, and dispersal of filamentous fungi in the environment rely upon a capability of their secreting small amphipathic proteins called hydrophobins (HPBs) with low sequence identity. Class I can self-assemble into an outermost layer of rodlet bundles on aerial cell surfaces, conferring cellular hydrophobicity that supports fungal growth, development and dispersal; whereas Class II form highly ordered films at water-air interfaces through intermolecular interactions but contribute nothing to the rodlet structure. NC2 is a class II hydrophobin that has the potential to adsorb to the hydrophobic interface at the hydrophobic-hydrophilic interface at very high rate but the predicted self-assembly NC2 film possesses a lower flexural rigidity than other class II hydrophobins such as HFBII from Hypocrea jecorina (also known as Trichoderma reesei). The protein is Class II hydrophobin NC2 of Neurospora crassa (strain ATCC 24698 / 74-OR23-1A / CBS 708.71 / DSM 1257 / FGSC 987).